Reading from the N-terminus, the 151-residue chain is Ribonuclease H (151 aa).

The RNase H type-1 domain occupies 1–141; that stretch reads MKHVDIFTDG…ADELARRGME (141 aa). Mg(2+) is bound by residues Asp9, Glu47, Asp69, and Asp133.

The protein belongs to the RNase H family. Monomer. Mg(2+) is required as a cofactor.

It localises to the cytoplasm. It catalyses the reaction Endonucleolytic cleavage to 5'-phosphomonoester.. Endonuclease that specifically degrades the RNA of RNA-DNA hybrids. This is Ribonuclease H from Rhizobium etli (strain ATCC 51251 / DSM 11541 / JCM 21823 / NBRC 15573 / CFN 42).